A 279-amino-acid polypeptide reads, in one-letter code: Tumor necrosis factor ligand superfamily member 6 (279 aa).

Residues 1–78 lie on the Cytoplasmic side of the membrane; it reads MQQPMNYPCP…PLKKKDHNTN (78 aa). Residues 30 to 70 are disordered; the sequence is FPCPSCGPRGPDQRRPPPPPPPVSPLPPPSQPLPLPPLTPL. The span at 45–68 shows a compositional bias: pro residues; that stretch reads PPPPPPPVSPLPPPSQPLPLPPLT. A helical; Signal-anchor for type II membrane protein transmembrane segment spans residues 79–100; the sequence is LWLPVVFFMVLVALVGMGLGMY. At 101–279 the chain is on the extracellular side; it reads QLFHLQKELA…SKTFFGLYKL (179 aa). The N-linked (GlcNAc...) asparagine glycan is linked to asparagine 117. The span at 126 to 135 shows a compositional bias: polar residues; that stretch reads EKQIANPSTP. Residues 126–150 are disordered; sequence EKQIANPSTPSEKKEPRSVAHLTGN. Residues 143-279 enclose the THD domain; sequence SVAHLTGNPH…SKTFFGLYKL (137 aa). N-linked (GlcNAc...) asparagine glycosylation occurs at asparagine 182. Cysteine 200 and cysteine 231 are disulfide-bonded. Residues asparagine 248 and asparagine 258 are each glycosylated (N-linked (GlcNAc...) asparagine).

It belongs to the tumor necrosis factor family. Homotrimer. Interacts with ARHGAP9, BAIAP2L1, BTK, CACNB3, CACNB4, CRK, DLG2, DNMBP, DOCK4, EPS8L3, FGR, FYB1, FYN, HCK, ITK, ITSN2, KALRN, LYN, MACC1, MIA, MPP4, MYO15A, NCF1, NCK1, NCK2, NCKIPSD, OSTF1, PIK3R1, PSTPIP1, RIMBP3C, SAMSN1, SH3GL3, SH3PXD2B, SH3PXD2A, SH3RF2, SKAP2, SNX33, SNX9, SORBS3, SPTA1, SRC, SRGAP1, SRGAP2, SRGAP3, TEC, TJP3 and YES1. The soluble form derives from the membrane form by proteolytic processing. The membrane-bound form undergoes two successive intramembrane proteolytic cleavages. The first one is processed by ADAM10 producing an N-terminal fragment, which lacks the receptor-binding extracellular domain. This ADAM10-processed FasL (FAsL APL) remnant form is still membrane anchored and further processed by SPPL2A that liberates the FasL intracellular domain (FasL ICD). FasL shedding by ADAM10 is a prerequisite for subsequent intramembrane cleavage by SPPL2A in T-cells. In terms of processing, phosphorylated by FGR on tyrosine residues; this is required for ubiquitination and subsequent internalization. Post-translationally, N-glycosylated. Glycosylation enhances apoptotic activity. Monoubiquitinated. Expressed in T-cells. Expressed in natural killer cells.

The protein resides in the cell membrane. It localises to the cytoplasmic vesicle lumen. Its subcellular location is the lysosome lumen. The protein localises to the secreted. It is found in the nucleus. Functionally, cytokine that binds to TNFRSF6/FAS, a receptor that transduces the apoptotic signal into cells. Involved in cytotoxic T-cell-mediated apoptosis, natural killer cell-mediated apoptosis and in T-cell development. Initiates fratricidal/suicidal activation-induced cell death (AICD) in antigen-activated T-cells contributing to the termination of immune responses. TNFRSF6/FAS-mediated apoptosis also has a role in the induction of peripheral tolerance. Binds to TNFRSF6B/DcR3, a decoy receptor that blocks apoptosis. In terms of biological role, induces FAS-mediated activation of NF-kappa-B, initiating non-apoptotic signaling pathways. Can induce apoptosis but does not appear to be essential for this process. Cytoplasmic form induces gene transcription inhibition. The protein is Tumor necrosis factor ligand superfamily member 6 (Faslg) of Mus musculus (Mouse).